Consider the following 236-residue polypeptide: MGSVDPSRLSLVLFARLSGLVVAVSVLYWALFLPNLGLSYSTLHPLLMVIGFILVSGEAILIHRWLPGSRKTKKAVHLWLQGMALASAVFGIWTKFHYQRGVFANFYSLHSWMGLLSVSLFAAQWVTGFMSFWHRGEVRTTRTTFLPWHVFLGLYTYGLAIATAETGLLEKLTFLQTKRNVPRRGSESMTVNGLGLGLALLGCIVITAAILPKYQSHSRDEKLVYSSQDRPKCLSS.

The Cytochrome b561 domain occupies 14 to 210 (FARLSGLVVA…LGCIVITAAI (197 aa)). The next 3 helical transmembrane spans lie at 17–37 (LSGLVVAVSVLYWALFLPNLG), 42–62 (TLHPLLMVIGFILVSGEAILI), and 76–96 (VHLWLQGMALASAVFGIWTKF). Residues histidine 44, histidine 77, and histidine 110 each contribute to the heme b site. 3 consecutive transmembrane segments (helical) span residues 112-132 (WMGLLSVSLFAAQWVTGFMSF), 144-164 (TFLPWHVFLGLYTYGLAIATA), and 191-211 (VNGLGLGLALLGCIVITAAIL). Position 149 (histidine 149) interacts with heme b.

Homodimer. Heme b is required as a cofactor.

Its subcellular location is the membrane. The enzyme catalyses Fe(3+)(out) + L-ascorbate(in) = monodehydro-L-ascorbate radical(in) + Fe(2+)(out) + H(+). In terms of biological role, two-heme-containing cytochrome. May catalyze ascorbate-dependent trans-membrane ferric-chelate reduction. The protein is Probable transmembrane ascorbate ferrireductase 4 (CYB561D) of Arabidopsis thaliana (Mouse-ear cress).